The following is a 354-amino-acid chain: Protein RecA (354 aa).

65–72 is an ATP binding site; that stretch reads GPESSGKT.

This sequence belongs to the RecA family.

The protein resides in the cytoplasm. Its function is as follows. Can catalyze the hydrolysis of ATP in the presence of single-stranded DNA, the ATP-dependent uptake of single-stranded DNA by duplex DNA, and the ATP-dependent hybridization of homologous single-stranded DNAs. It interacts with LexA causing its activation and leading to its autocatalytic cleavage. This chain is Protein RecA, found in Aeromonas hydrophila subsp. hydrophila (strain ATCC 7966 / DSM 30187 / BCRC 13018 / CCUG 14551 / JCM 1027 / KCTC 2358 / NCIMB 9240 / NCTC 8049).